The chain runs to 73 residues: Putative beta-defensin 108A (73 aa).

The first 22 residues, 1 to 22 (MRIAVLFFTIFFFMSQVLPAKG), serve as a signal peptide directing secretion. 3 cysteine pairs are disulfide-bonded: C28–C55, C35–C49, and C39–C56.

It belongs to the beta-defensin family.

The protein resides in the secreted. Its function is as follows. Has antibacterial activity. This chain is Putative beta-defensin 108A, found in Homo sapiens (Human).